The chain runs to 4171 residues: Cytoplasmic dynein 2 heavy chain 1 (4171 aa).

A stem region spans residues 1–1598; sequence MSSDSKDQRK…VLRQVSSEFE (1598 aa). 115–122 is a binding site for ATP; sequence GKELTEGN. 5 coiled-coil regions span residues 164–203, 629–693, 829–861, 927–1048, and 1354–1383; these read ANDY…CDEL, KQLE…KEEE, DLEE…AERL, EIAE…KEKR, and SRQS…LEQK. 4 AAA regions span residues 1599-1823, 1883-2100, 2184-2432, and 2527-2767; these read YTYE…VLGG, EPLG…VRSH, VTKE…WVVS, and RFAF…PIKY. Residues 1637–1644, 1921–1928, 2226–2233, and 2565–2572 contribute to the ATP site; these read GPAGTGKT, GAAGSGKS, GTTGCGKQ, and GRPGFGRR. Positions 2776 to 3064 are stalk; it reads QLLGYKRLTL…VDLDREQDTI (289 aa). 3 coiled-coil regions span residues 2790–2877, 2999–3059, and 3308–3336; these read ERLK…KEVQ, EKIA…DLDR, and ELEE…LLLQ. AAA regions lie at residues 3140–3367 and 3575–3784; these read ASLE…IITK and LMDF…FVEQ.

The protein belongs to the dynein heavy chain family. As to quaternary structure, the cytoplasmic dynein complex 2 is probably composed by a heavy chain che-3 homodimer and a number of light intermediate chains.

It is found in the cell projection. The protein resides in the cilium membrane. It localises to the cytoplasm. Its subcellular location is the cytoskeleton. Its function is as follows. Functions as a motor for intraflagellar retrograde transport in chemosensory neurons. Functions in cilia biogenesis. This chain is Cytoplasmic dynein 2 heavy chain 1, found in Caenorhabditis elegans.